Reading from the N-terminus, the 302-residue chain is MYYGFDVGGTKIEFGAFNEKLERVATERVPTPTDNYELLVDTIAELVNKYDAEFGCEGTIGLGLPGMEDADDATVLTVNVPAAKGKPLRADLEAKIGRSVKIENDANCFALSEAWDEELQDEPSVLGLILGTGFGGGFIYDGKVFSGRNHVAGEVGHTRLPIDAWFHLGENAPLLGCGCDKKGCLDSYLSGRGFELLYAHYYGEEKKAIDIIKAHAEGEAKAVEHVERFMELLAICFANIFTATDPHVVVLGGGLSNFELIYEEMPKRIPKYLLSVAKCPKIIKAKHGDSGGVRGAAFLHIK.

Residues 4-11 and 133-140 contribute to the ATP site; these read GFDVGGTK and GFGGGFIY. H157, C177, C179, and C184 together coordinate Zn(2+).

This sequence belongs to the ROK (NagC/XylR) family. NagK subfamily.

It catalyses the reaction N-acetyl-D-glucosamine + ATP = N-acetyl-D-glucosamine 6-phosphate + ADP + H(+). It functions in the pathway cell wall biogenesis; peptidoglycan recycling. Catalyzes the phosphorylation of N-acetyl-D-glucosamine (GlcNAc) derived from cell-wall degradation, yielding GlcNAc-6-P. The sequence is that of N-acetyl-D-glucosamine kinase from Vibrio parahaemolyticus serotype O3:K6 (strain RIMD 2210633).